Consider the following 619-residue polypeptide: MSEVLQRITDPKEIKDLDEKELEILAEDLREFLIESVSNTGGHFASNLGVIDLTVALFKNFDFSEDRIIWDVGHQSYAYKILTGRKDKFNTLRQYGGLCGFPKRTESEYDFFATGHSSTSLSSAAGMARAQRLLGKDNKVIAVIGDGALTGGMALEALNDIGYRKDNLIIILNDNQMSICKNVGGLATYLNKLRMGVGYNKLKSDIGSTLDTTSLGKRVKNSLSKLKDGIKKIVVPSMYFEDIGLKYFGIVDGHNIRELNEVLSIAKNIKGPVIIHTVTKKGKGYELAEKNPNKYHGVSPFDLGEGVISKFSSRNYSSTFGEEMIKLAKNDDKVVAITAAMPDGTGLKDFREEFPDRFFDVGIAEQHAVTLAAGMAAEGLKPFFAVYSTFLQRAYDQVLHDVCIQKLPVTLCLDRAGLVGEDGETHQGIFDISFLSPMPNMTIVAPKCIDEMEVILKWASNFNAPLAIRYPRGGDIDVNLKPLSKIEYGKWEKVQEGEKIAIVATGKMVQHAMIAAQKIKEEKNIDILIINATFIKPIDKELLNSLSKDGFKIVTIEDNIKKGGFGEGVLEYLNEIGHKEKIVTLAFNDKFIEHGKPDILYKINGLDAEGIKNTLIELL.

Thiamine diphosphate-binding positions include His-74 and 115–117 (GHS). Position 146 (Asp-146) interacts with Mg(2+). Thiamine diphosphate is bound by residues 147–148 (GA), Asn-175, Tyr-285, and Glu-365. Asn-175 serves as a coordination point for Mg(2+).

This sequence belongs to the transketolase family. DXPS subfamily. Homodimer. The cofactor is Mg(2+). Requires thiamine diphosphate as cofactor.

The enzyme catalyses D-glyceraldehyde 3-phosphate + pyruvate + H(+) = 1-deoxy-D-xylulose 5-phosphate + CO2. The protein operates within metabolic intermediate biosynthesis; 1-deoxy-D-xylulose 5-phosphate biosynthesis; 1-deoxy-D-xylulose 5-phosphate from D-glyceraldehyde 3-phosphate and pyruvate: step 1/1. Functionally, catalyzes the acyloin condensation reaction between C atoms 2 and 3 of pyruvate and glyceraldehyde 3-phosphate to yield 1-deoxy-D-xylulose-5-phosphate (DXP). In Clostridium perfringens (strain 13 / Type A), this protein is 1-deoxy-D-xylulose-5-phosphate synthase.